The sequence spans 312 residues: MIKEGFLIKTPKKLIALLGPSGSGKSALSIELAQELDAEIFSLDSLSIYEDINIASAKPSLKERKNIKHYALDYLNIDEKNNASLFKTLLEDAMRVSSKEILLIVGGSSFYLKSILEGLSGMPKLSDEEVVKIEREIATLSNPYIFLKSIDPNMAFKIHPNDTYRIHKALEIFYATHTPPSEYFKANPKKPFEHAISLFALSVEKNALANNIKQRTKSMLDCGLIEEIKALYIKYPKDSQPFKAIGVKESVLYLEKRLTLKELEEAIISNTMKLAKRQNTFNKTQFNNLYMGSVGEIRHAILKHSKSDTRER.

19-26 (GPSGSGKS) lines the ATP pocket. 21–26 (SGSGKS) is a substrate binding site. Positions 44–47 (DSLS) are interaction with substrate tRNA.

The protein belongs to the IPP transferase family. Monomer. It depends on Mg(2+) as a cofactor.

It carries out the reaction adenosine(37) in tRNA + dimethylallyl diphosphate = N(6)-dimethylallyladenosine(37) in tRNA + diphosphate. Its function is as follows. Catalyzes the transfer of a dimethylallyl group onto the adenine at position 37 in tRNAs that read codons beginning with uridine, leading to the formation of N6-(dimethylallyl)adenosine (i(6)A). This is tRNA dimethylallyltransferase from Helicobacter pylori (strain J99 / ATCC 700824) (Campylobacter pylori J99).